A 370-amino-acid chain; its full sequence is Ubiquitin carboxyl-terminal hydrolase 12 (370 aa).

Positions 1-4 match the Required for plasma membrane localization of USP12/WDR20 motif; that stretch reads MEIL. The 331-residue stretch at 39 to 369 folds into the USP domain; it reads FGLVNFGNTC…SGYILFYQSR (331 aa). Catalysis depends on C48, which acts as the Nucleophile. A compositionally biased stretch (basic and acidic residues) spans 146 to 157; it reads QEKQNGRLRNGD. Residues 146–168 are disordered; that stretch reads QEKQNGRLRNGDVDNEDNNSTPD. Residues C186, C189, C233, and C236 each contribute to the Zn(2+) site. Catalysis depends on H317, which acts as the Proton acceptor.

The protein belongs to the peptidase C19 family. USP12/USP46 subfamily. In terms of assembly, interacts with WDR48. Interacts with WDR20; this interaction promotes translocation of the USP12 complex to the plasma membrane. Component of the USP12/WDR20/WDR48 deubiquitinating complex. Component of the USP12/DMWD/WDR48 deubiquitinating complex. Interacts with PHLPP1. Interacts with RBPJ. Interacts with CBP; this interaction blocks the acetyltransferase activity of CREBBP.

It is found in the nucleus. The protein resides in the cytoplasm. The protein localises to the cell membrane. It carries out the reaction Thiol-dependent hydrolysis of ester, thioester, amide, peptide and isopeptide bonds formed by the C-terminal Gly of ubiquitin (a 76-residue protein attached to proteins as an intracellular targeting signal).. With respect to regulation, activated by interaction with WDR20; WDR48 and DMWD through different allosteric mechanisms. Deubiquitinating enzyme that plays various roles in the regulation of the immune response and inflammation. During TCR engagement and activation, translocates into the cytoplasm and deubiquitinates its substrates LAT and TRAT1 and prevents their lysosome-dependent degradation to stabilize the TCR signaling complex at the plasma membrane. Plays an essential role in the selective LPS-induced macrophage response through the activation of NF-kappa-B pathway. In addition, promotes that antiviral immune response through targeting DNA sensor IFI16 to inhibit its proteasome-dependent degradation. Participates in the interferon signaling pathway and antiviral response independently of its deubiquitinase activity by maintaining nuclear phosphorylated STAT1 levels via inhibition of its CREBBP-mediated acetylation and subsequent dephosphorylation. Plays an intrinsic role in promoting the differentiation, activation and proliferation of CD4(+) T-cell by activating the NF-kappa-B signaling pathway through deubiquitinating and stabilizing B-cell lymphoma/leukemia 10/BCL10. In myeloid-derived suppressor cells promotes the activation of the NF-kappa-B via deubiquitination and stabilization of RELA. Regulates the 'Lys-63'-linked polyubiquitin chains of BAX and thereby modulates the mitochondrial apoptotic process. Negative regulator of NOTCH signaling that specifically deubiquitinates non-activated NOTCH receptors to target them for lysosomal degradation; deubiquitination of NOTCH stimulates its transport form late endosomes to lysosomes. Protects neurons against HTT/huntingtin-induced polyglutamine expansion-dependent neurodegeneration through regulation of autophagic flux. This function is independent of deubiquitinase activity or of other components of the USP12-WDR20-WDR48 deubiquitinating complex. In complex with WDR48, acts as a potential tumor suppressor by positively regulating PHLPP1 stability. This Mus musculus (Mouse) protein is Ubiquitin carboxyl-terminal hydrolase 12 (Usp12).